Consider the following 648-residue polypeptide: Zinc finger protein 202 (648 aa).

A Glycyl lysine isopeptide (Lys-Gly) (interchain with G-Cter in SUMO2) cross-link involves residue K22. The SCAN box domain maps to 46–127; the sequence is HQNFRRFRYQ…VTLVEGLQKQ (82 aa). The segment at 146 to 221 is disordered; the sequence is SEETVHLGVE…PDLPAERSSG (76 aa). Residues 165–182 show a composition bias toward polar residues; it reads PVQSSTPEQSPEETTQSP. The 72-residue stretch at 237 to 308 folds into the KRAB domain; sequence VTFKDVAVCF…DIQEPQETQE (72 aa). 2 consecutive C2H2-type zinc fingers follow at residues 397 to 419 and 425 to 447; these read HDCSVCGKSFTCNSHLVRHLRTH and YKCMECGKSYTRSSHLARHQKVH. Glycyl lysine isopeptide (Lys-Gly) (interchain with G-Cter in SUMO2) cross-links involve residues K454 and K460. S466 is modified (phosphoserine). The C2H2-type 3 zinc finger occupies 481 to 503; that stretch reads YRCDDCGKHFRWTSDLVRHQRTH. Glycyl lysine isopeptide (Lys-Gly) (interchain with G-Cter in SUMO2) cross-links involve residues K507 and K521. 5 C2H2-type zinc fingers span residues 509–531, 537–559, 565–587, 593–615, and 621–643; these read FFCTICGKSFSQKSVLTTHQRIH, YLCGECGEDFSEHRRYLAHRKTH, YLCSECGRCFTHSAAFAKHLRGH, CRCNECGKSFSRRDHLVRHQRTH, and FTCPTCGKSFSRGYHLIRHQRTH.

As to quaternary structure, interacts with SDP1. In terms of tissue distribution, highly expressed in testis. Also expressed in breast carcinoma cell lines.

The protein resides in the nucleus. Its function is as follows. Transcriptional repressor that binds to elements found predominantly in genes that participate in lipid metabolism. Among its targets are structural components of lipoprotein particles (apolipoproteins AIV, CIII, and E), enzymes involved in lipid processing (lipoprotein lipase, lecithin cholesteryl ester transferase), transporters involved in lipid homeostasis (ABCA1, ABCG1), and several genes involved in processes related to energy metabolism and vascular disease. This Homo sapiens (Human) protein is Zinc finger protein 202 (ZNF202).